The sequence spans 158 residues: uncharacterized protein (158 aa).

It is found in the mitochondrion. This is an uncharacterized protein from Arabidopsis thaliana (Mouse-ear cress).